A 459-amino-acid polypeptide reads, in one-letter code: Mycothione reductase (459 aa).

31-39 (EQGTFGGTC) is a binding site for FAD. C39 and C44 are joined by a disulfide. The Proton acceptor role is filled by H444.

This sequence belongs to the class-I pyridine nucleotide-disulfide oxidoreductase family. As to quaternary structure, homodimer. FAD is required as a cofactor.

It carries out the reaction 2 mycothiol + NADP(+) = mycothione + NADPH + H(+). The enzyme catalyses 2 mycothiol + NAD(+) = mycothione + NADH + H(+). Catalyzes the NAD(P)H-dependent reduction of mycothione (the oxidized disulfide form of mycothiol) to mycothiol. This is Mycothione reductase (mtr) from Mycobacterium tuberculosis (strain CDC 1551 / Oshkosh).